The primary structure comprises 297 residues: HTH-type transcriptional regulator ArgP (297 aa).

The 57-residue stretch at 4-60 (PDYRTLQALDAVIRERGFERAAQKLCITQSAVSQRIKQLENMFGQPLLVRTVPPRPT) folds into the HTH lysR-type domain. Positions 21–40 (FERAAQKLCITQSAVSQRIK) form a DNA-binding region, H-T-H motif.

This sequence belongs to the LysR transcriptional regulatory family. Homodimer.

Its function is as follows. Controls the transcription of genes involved in arginine and lysine metabolism. The protein is HTH-type transcriptional regulator ArgP of Enterobacter sp. (strain 638).